Reading from the N-terminus, the 289-residue chain is Oxaloacetate decarboxylase (289 aa).

Residue Ser47 coordinates substrate. Residue Asp85 participates in Mg(2+) binding. Arg156 and His232 together coordinate substrate.

This sequence belongs to the isocitrate lyase/PEP mutase superfamily. Oxaloacetate decarboxylase family. As to quaternary structure, homotetramer; dimer of dimers. It depends on Mg(2+) as a cofactor.

It carries out the reaction oxaloacetate + H(+) = pyruvate + CO2. Its function is as follows. Catalyzes the decarboxylation of oxaloacetate into pyruvate. Seems to play a role in maintaining cellular concentrations of bicarbonate and pyruvate. In Rhodopseudomonas palustris (strain HaA2), this protein is Oxaloacetate decarboxylase.